Consider the following 257-residue polypeptide: Homeobox protein ceh-36 (257 aa).

Positions 33–49 (SATTSSTTMAPMAPNSE) are enriched in low complexity. Disordered stretches follow at residues 33-63 (SATT…TSFN) and 113-156 (DRNN…GTPE). Positions 55 to 117 (GRRERTSFNR…NRRAKDRNNK (63 aa)) form a DNA-binding region, homeobox. Residues 123 to 137 (HPGSTSSRSSNGSPH) show a composition bias toward low complexity.

Belongs to the paired homeobox family. In terms of assembly, interacts with sox-2. Expressed in ASE and AWC chemosensory neurons. Expressed left-right asymmetrically in the embryo, in the grandmother cell and the mother cell to the MI pharyngeal motorneuron but in neither analogous precursors of the e3D neuron.

It localises to the nucleus. In terms of biological role, probable transcription factor, acting as a progenitor identity factor regulating the development of lineally-related embryonic cells including glial, excretory and neuronal cells. Mediates chemosensory function of ASE and AWC neurons. In ASE neurons, required to diversify the fate of the ASEL neurons from the ASER neurons. Acts cell-autonomously to establish a neuronal left right asymmetry, possibly promoting asymmetric expression of the helix-loop-helix proteins ngn-1 and hlh-2. In cooperation with the transcription factor sox-2, required for the differentiation of AWC olfactory neurons. May regulate the expression of sox-2 in AWC olfactory neurons. In Caenorhabditis elegans, this protein is Homeobox protein ceh-36.